The sequence spans 147 residues: Sulfur acceptor protein CsdE (147 aa).

C61 (cysteine persulfide intermediate) is an active-site residue. Residue C61 is modified to Cysteine persulfide.

This sequence belongs to the SufE family. As to quaternary structure, homodimer. Forms a heterodimer with CsdA. Interacts with CsdA and with TcdA/CsdL.

Stimulates the cysteine desulfurase activity of CsdA. Contains a cysteine residue (Cys-61) that acts to accept sulfur liberated via the desulfurase activity of CsdA. May be able to transfer sulfur to TcdA/CsdL. Seems to support the function of TcdA in the generation of cyclic threonylcarbamoyladenosine at position 37 (ct(6)A37) in tRNAs that read codons beginning with adenine. Does not appear to participate in Fe/S biogenesis. In Escherichia coli (strain K12), this protein is Sulfur acceptor protein CsdE (csdE).